The sequence spans 207 residues: Small ribosomal subunit protein uS4c (207 aa).

One can recognise an S4 RNA-binding domain in the interval 92–150 (MRLDNILFRLGFVPTIPSARQLINHRHILVNNRIVDVPSFHCKPKDIITIGSPKTYQSI).

This sequence belongs to the universal ribosomal protein uS4 family. As to quaternary structure, part of the 30S ribosomal subunit. Contacts protein S5. The interaction surface between S4 and S5 is involved in control of translational fidelity.

The protein resides in the plastid. The protein localises to the chloroplast. One of the primary rRNA binding proteins, it binds directly to 16S rRNA where it nucleates assembly of the body of the 30S subunit. In terms of biological role, with S5 and S12 plays an important role in translational accuracy. The chain is Small ribosomal subunit protein uS4c (rps4) from Equisetum variegatum (Variegated horsetail).